An 80-amino-acid chain; its full sequence is Acyl carrier protein (80 aa).

One can recognise a Carrier domain in the interval 4 to 79 (ANVEQKVKNI…DAVNYITTHK (76 aa)). Serine 39 carries the O-(pantetheine 4'-phosphoryl)serine modification.

Belongs to the acyl carrier protein (ACP) family. 4'-phosphopantetheine is transferred from CoA to a specific serine of apo-ACP by AcpS. This modification is essential for activity because fatty acids are bound in thioester linkage to the sulfhydryl of the prosthetic group.

It localises to the cytoplasm. It participates in lipid metabolism; fatty acid biosynthesis. Carrier of the growing fatty acid chain in fatty acid biosynthesis. This is Acyl carrier protein from Anaeromyxobacter sp. (strain Fw109-5).